Reading from the N-terminus, the 193-residue chain is Peptidyl-tRNA hydrolase (193 aa).

Residue Tyr-16 coordinates tRNA. Residue His-21 is the Proton acceptor of the active site. Residues Phe-67, Asn-69, and Asn-115 each contribute to the tRNA site.

This sequence belongs to the PTH family. As to quaternary structure, monomer.

Its subcellular location is the cytoplasm. The catalysed reaction is an N-acyl-L-alpha-aminoacyl-tRNA + H2O = an N-acyl-L-amino acid + a tRNA + H(+). Its function is as follows. Hydrolyzes ribosome-free peptidyl-tRNAs (with 1 or more amino acids incorporated), which drop off the ribosome during protein synthesis, or as a result of ribosome stalling. In terms of biological role, catalyzes the release of premature peptidyl moieties from peptidyl-tRNA molecules trapped in stalled 50S ribosomal subunits, and thus maintains levels of free tRNAs and 50S ribosomes. The chain is Peptidyl-tRNA hydrolase from Psychrobacter cryohalolentis (strain ATCC BAA-1226 / DSM 17306 / VKM B-2378 / K5).